We begin with the raw amino-acid sequence, 689 residues long: Armadillo-like helical domain-containing protein 3 (689 aa).

The helical transmembrane segment at 520–538 (IFQLALQVVNLFNMFITYG) threads the bilayer.

The protein belongs to the ARMH3 family.

It is found in the golgi apparatus membrane. The protein resides in the cytoplasm. Functionally, may be involved in Golgi maintenance and protein secretion. In Danio rerio (Zebrafish), this protein is Armadillo-like helical domain-containing protein 3.